Consider the following 578-residue polypeptide: Membrane protein insertase YidC (578 aa).

A helical membrane pass occupies residues 3 to 23 (IQRSILIVALAVVSYLLVLQW). A disordered region spans residues 34-72 (AASASMNTTQGLPDTPSASGTSSDVPTAQSSAAGSEAAD). Polar residues predominate over residues 37–66 (ASMNTTQGLPDTPSASGTSSDVPTAQSSAA). 5 helical membrane passes run 361–381 (LELTVDYGFLWFIAQPIFWLL), 387–407 (LIGNWGWSIIALTVLIKLAFF), 457–477 (LGGCLPILVQMPVFLSLYWVL), 500–520 (PFFILPIVMGGTMLIQQMLNP), and 535–555 (PIIFTFFFLWFPAGLVLYWVV).

The protein belongs to the OXA1/ALB3/YidC family. Type 1 subfamily. As to quaternary structure, interacts with the Sec translocase complex via SecD. Specifically interacts with transmembrane segments of nascent integral membrane proteins during membrane integration.

The protein localises to the cell inner membrane. In terms of biological role, required for the insertion and/or proper folding and/or complex formation of integral membrane proteins into the membrane. Involved in integration of membrane proteins that insert both dependently and independently of the Sec translocase complex, as well as at least some lipoproteins. Aids folding of multispanning membrane proteins. The chain is Membrane protein insertase YidC from Pseudomonas aeruginosa (strain LESB58).